The following is a 519-amino-acid chain: Protein nucleotidyltransferase YdiU (519 aa).

Residues glycine 100, glycine 102, arginine 103, lysine 123, aspartate 135, glycine 136, arginine 193, and arginine 200 each contribute to the ATP site. Aspartate 270 (proton acceptor) is an active-site residue. Mg(2+) is bound by residues asparagine 271 and aspartate 280. Aspartate 280 contacts ATP.

This sequence belongs to the SELO family. Requires Mg(2+) as cofactor. The cofactor is Mn(2+).

The catalysed reaction is L-seryl-[protein] + ATP = 3-O-(5'-adenylyl)-L-seryl-[protein] + diphosphate. The enzyme catalyses L-threonyl-[protein] + ATP = 3-O-(5'-adenylyl)-L-threonyl-[protein] + diphosphate. It catalyses the reaction L-tyrosyl-[protein] + ATP = O-(5'-adenylyl)-L-tyrosyl-[protein] + diphosphate. It carries out the reaction L-histidyl-[protein] + UTP = N(tele)-(5'-uridylyl)-L-histidyl-[protein] + diphosphate. The catalysed reaction is L-seryl-[protein] + UTP = O-(5'-uridylyl)-L-seryl-[protein] + diphosphate. The enzyme catalyses L-tyrosyl-[protein] + UTP = O-(5'-uridylyl)-L-tyrosyl-[protein] + diphosphate. Nucleotidyltransferase involved in the post-translational modification of proteins. It can catalyze the addition of adenosine monophosphate (AMP) or uridine monophosphate (UMP) to a protein, resulting in modifications known as AMPylation and UMPylation. The sequence is that of Protein nucleotidyltransferase YdiU from Xylella fastidiosa (strain Temecula1 / ATCC 700964).